Reading from the N-terminus, the 300-residue chain is MAAARPALPSSPTSLLLARSTSAPDLAARRPRRWLVAAAGVPAVAGALAASASTPAASMLLRDGGATLLVTAGAYSLVRAFDALTERRLVQQSLSRKVVHVLSGVFFMASWPLFSNSTSARFFAAVVPFLNCVRLLTYGLGFYSDEALVKSVTREGKREELLRGPLYYVIVLLIIVLVFWRDSPIGIVSLSMMSGGDGFADIVGRRFGSLKLPFNKKKSWVGSAAMFISGFLLSALMLSYFSWLGYIHVSWDQALGKLVLVALAATVVECIPVTDVVDDNISVPLATMLVAFLLFGNTAN.

Residues 1-36 constitute a chloroplast transit peptide; it reads MAAARPALPSSPTSLLLARSTSAPDLAARRPRRWLV. 7 helical membrane-spanning segments follow: residues 60-78, 98-118, 122-142, 168-188, 227-247, 254-274, and 276-296; these read LLRD…YSLV, VVHV…SNST, FFAA…GLGF, YVIV…IGIV, FISG…LGYI, ALGK…IPVT, and VVDD…LLFG.

This sequence belongs to the polyprenol kinase family.

It is found in the plastid. The protein localises to the chloroplast membrane. It catalyses the reaction phytol + CTP = phytyl phosphate + CDP + H(+). Its pathway is cofactor biosynthesis; tocopherol biosynthesis. Involved in the activation and reutilization of phytol from chlorophyll degradation in plant metabolism, including tocopherol biosynthesis. Catalyzes the conversion of phytol to phytol monophosphate (PMP). The chain is Probable phytol kinase, chloroplastic from Triticum aestivum (Wheat).